A 318-amino-acid polypeptide reads, in one-letter code: tRNA-modifying protein YgfZ (318 aa).

Folate-binding residues include Trp28 and Trp182.

This sequence belongs to the tRNA-modifying YgfZ family.

It is found in the cytoplasm. Functionally, folate-binding protein involved in regulating the level of ATP-DnaA and in the modification of some tRNAs. It is probably a key factor in regulatory networks that act via tRNA modification, such as initiation of chromosomal replication. This chain is tRNA-modifying protein YgfZ, found in Aliivibrio fischeri (strain ATCC 700601 / ES114) (Vibrio fischeri).